A 1047-amino-acid polypeptide reads, in one-letter code: Probable phospholipid-transporting ATPase IIA (1047 aa).

The residue at position 2 (Thr-2) is an N-acetylthreonine. Residues 2–69 are Cytoplasmic-facing; that stretch reads TDNIPLQPVR…NQKYNFFTFL (68 aa). The chain crosses the membrane as a helical span at residues 70–91; the sequence is PGVLFNQFKYFFNLYFLLLACS. Residues 92–96 lie on the Extracellular side of the membrane; the sequence is QFVPE. A helical membrane pass occupies residues 97–119; it reads MRLGALYTYWVPLGFVLAVTVIR. At 120 to 303 the chain is on the cytoplasmic side; that stretch reads EAVEEIRCYV…GLFDLEVNCL (184 aa). Residues 304 to 325 traverse the membrane as a helical segment; it reads TKILFGALVVVSLVMVALQHFA. Over 326 to 332 the chain is Extracellular; that stretch reads GRWYLQI. Residues 333–354 traverse the membrane as a helical segment; the sequence is IRFLLLFSNIIPISLRVNLDMG. Over 355-841 the chain is Cytoplasmic; that stretch reads KIVYSWVIRR…GRNSYKRSAA (487 aa). Catalysis depends on Asp-391, which acts as the 4-aspartylphosphate intermediate. The ATP site is built by Asp-391, Lys-392, Thr-393, Glu-502, Phe-544, Lys-549, Lys-568, Arg-597, Thr-677, Gly-678, Asp-679, Arg-759, and Lys-765. A Mg(2+)-binding site is contributed by Asp-391. Residue Thr-393 participates in Mg(2+) binding. Asp-785 is a binding site for Mg(2+). Residues Asn-788 and Asp-789 each contribute to the ATP site. Asp-789 contributes to the Mg(2+) binding site. The helical transmembrane segment at 842–862 threads the bilayer; it reads LSQFVIHRSLCISTMQAVFSS. The Extracellular segment spans residues 863–874; sequence VFYFASVPLYQG. A helical membrane pass occupies residues 875-893; sequence FLIIGYSTIYTMFPVFSLV. The Cytoplasmic portion of the chain corresponds to 894 to 923; the sequence is LDKDVKSEVAMLYPELYKDLLKGRPLSYKT. Residues 924–942 traverse the membrane as a helical segment; it reads FLIWVLISIYQGSTIMYGA. The Extracellular portion of the chain corresponds to 943–949; sequence LLLFESE. The helical transmembrane segment at 950–972 threads the bilayer; it reads FVHIVAISFTSLILTELLMVALT. The Cytoplasmic segment spans residues 973–978; that stretch reads IQTWHW. A helical membrane pass occupies residues 979-999; it reads LMTVAELLSLACYIASLVFLH. Residues 1000–1006 lie on the Extracellular side of the membrane; sequence EFIDVYF. Residues 1007–1030 traverse the membrane as a helical segment; that stretch reads IATLSFLWKVSVITLVSCLPLYVL. The Cytoplasmic portion of the chain corresponds to 1031 to 1047; the sequence is KYLRRRFSPPSYSKLTS.

Belongs to the cation transport ATPase (P-type) (TC 3.A.3) family. Type IV subfamily. In terms of assembly, heterotrimer with MON2 and DOP1B; this complex regulates SNX3-retromer mediated endosomal sorting of WLS. Interacts with RAB5A and RAB11A. Mg(2+) is required as a cofactor.

The protein resides in the early endosome membrane. The protein localises to the recycling endosome membrane. Its subcellular location is the late endosome membrane. It is found in the golgi apparatus. It localises to the trans-Golgi network membrane. The protein resides in the cell membrane. It catalyses the reaction ATP + H2O + phospholipidSide 1 = ADP + phosphate + phospholipidSide 2.. Its function is as follows. Plays a role in regulating membrane trafficking of cargo proteins, namely endosome to plasma membrane recycling, probably acting through RAB5 and RAB11 activation. Also involved in endosome to trans-Golgi network retrograde transport. In complex with MON2 and DOP1B, regulates SNX3 retromer-mediated endosomal sorting of WLS, a transporter of Wnt morphogens in developing tissues. Participates in the formation of endosomal carriers that direct WLS trafficking back to Golgi, away from lysosomal degradation. Appears to be implicated in intercellular communication by negatively regulating the release of exosomes. The flippase activity towards membrane lipids and its role in membrane asymmetry remains to be proved. Required for the maintenance of neurite morphology and synaptic transmission. The sequence is that of Probable phospholipid-transporting ATPase IIA from Homo sapiens (Human).